The primary structure comprises 310 residues: Olfactory receptor 8B12 (310 aa).

The Extracellular portion of the chain corresponds to 1-24; the sequence is MAAKNSSVTEFILEGLTHQPGLRI. N5 carries N-linked (GlcNAc...) asparagine glycosylation. A helical transmembrane segment spans residues 25 to 45; it reads PLFFLFLGFYTVTVVGNLGLI. At 46 to 53 the chain is on the cytoplasmic side; it reads TLIGLNSH. A helical transmembrane segment spans residues 54–74; that stretch reads LHTPMYFFLFNLSLIDFCFST. The Extracellular segment spans residues 75–98; that stretch reads TITPKMLMSFVSRKNIISFTGCMT. C96 and C188 are disulfide-bonded. The helical transmembrane segment at 99 to 119 threads the bilayer; it reads QLFFFCFFVVSESFILSAMAY. Over 120 to 138 the chain is Cytoplasmic; it reads DRYVAICNPLLYTVTMSCQ. A helical transmembrane segment spans residues 139-159; it reads VCLLLLLGAYGMGFAGAMAHT. At 160–196 the chain is on the extracellular side; the sequence is GSIMNLTFCADNLVNHFMCDILPLLELSCNSSYMNEL. N-linked (GlcNAc...) asparagine glycosylation is found at N164 and N189. The helical transmembrane segment at 197-216 threads the bilayer; sequence VVFIVVAVDVGMPIVTVFIS. Over 217–236 the chain is Cytoplasmic; that stretch reads YALILSSILHNSSTEGRSKA. A helical membrane pass occupies residues 237–257; that stretch reads FSTCSSHIIVVSLFFGSGAFM. The Extracellular portion of the chain corresponds to 258-270; it reads YLKPLSILPLEQG. Residues 271–291 form a helical membrane-spanning segment; the sequence is KVSSLFYTIIVPVLNPLIYSL. Residues 292-310 are Cytoplasmic-facing; that stretch reads RNKDVKVALRRTLGRKIFS.

The protein belongs to the G-protein coupled receptor 1 family.

The protein resides in the cell membrane. Its function is as follows. Odorant receptor. The protein is Olfactory receptor 8B12 (OR8B12) of Homo sapiens (Human).